A 93-amino-acid chain; its full sequence is Large ribosomal subunit protein bL31 (93 aa).

The segment at 68–93 (GSADAAADEKKTDAKNNNKDNTSKED) is disordered. The segment covering 74-93 (ADEKKTDAKNNNKDNTSKED) has biased composition (basic and acidic residues).

It belongs to the bacterial ribosomal protein bL31 family. Type A subfamily. In terms of assembly, part of the 50S ribosomal subunit.

In terms of biological role, binds the 23S rRNA. The protein is Large ribosomal subunit protein bL31 of Prochlorococcus marinus (strain MIT 9303).